A 144-amino-acid polypeptide reads, in one-letter code: Putative pre-16S rRNA nuclease (144 aa).

It belongs to the YqgF nuclease family.

It localises to the cytoplasm. Functionally, could be a nuclease involved in processing of the 5'-end of pre-16S rRNA. This is Putative pre-16S rRNA nuclease from Prochlorococcus marinus (strain NATL1A).